A 423-amino-acid polypeptide reads, in one-letter code: G protein-activated inward rectifier potassium channel 2 (423 aa).

At 1–89 (MAKLTESMTN…IFTTLVDLKW (89 aa)) the chain is on the cytoplasmic side. Residues serine 16 and serine 23 each carry the phosphoserine modification. Residues 90–114 (RFNLLIFVMVYTVTWLFFGMIWWLI) traverse the membrane as a helical segment. Over 115–138 (AYIRGDMDHIEDPSWTPCVTNLNG) the chain is Extracellular. An intramembrane region (helical; Pore-forming) is located at residues 139–150 (FVSAFLFSIETE). An intramembrane region (pore-forming) is located at residues 151 to 157 (TTIGYGY). A Selectivity filter motif is present at residues 152–157 (TIGYGY). The Extracellular segment spans residues 158–166 (RVITDKCPE). Residues 167–188 (GIILLLIQSVLGSIVNAFMVGC) form a helical membrane-spanning segment. The Cytoplasmic segment spans residues 189 to 423 (MFVKISQPKK…VANLENESKV (235 aa)). Positions 390 to 423 (NQHAELETEEEEKNLEEQTERNGDVANLENESKV) are disordered. The short motif at 420–423 (ESKV) is the PDZ-binding element.

This sequence belongs to the inward rectifier-type potassium channel (TC 1.A.2.1) family. KCNJ6 subfamily. Associates with KCNJ3/GIRK1 or KCNJ5/GRIK4 to form a G-protein-activated heteromultimer pore-forming unit. The resulting inward current is much larger. Interacts (via PDZ-binding motif) with SNX27 (via PDZ domain); the interaction is required when endocytosed to prevent degradation in lysosomes and promote recycling to the plasma membrane.

The protein localises to the membrane. The catalysed reaction is K(+)(in) = K(+)(out). With respect to regulation, activated by phosphatidylinositol 4,5 biphosphate (PtdIns(4,5)P2). Functionally, inward rectifier potassium channels are characterized by a greater tendency to allow potassium to flow into the cell rather than out of it. Their voltage dependence is regulated by the concentration of extracellular potassium; as external potassium is raised, the voltage range of the channel opening shifts to more positive voltages. The inward rectification is mainly due to the blockage of outward current by internal magnesium. This potassium channel may be involved in the regulation of insulin secretion by glucose and/or neurotransmitters acting through G-protein-coupled receptors. The polypeptide is G protein-activated inward rectifier potassium channel 2 (KCNJ6) (Pongo abelii (Sumatran orangutan)).